A 436-amino-acid chain; its full sequence is Adenosylmethionine-8-amino-7-oxononanoate aminotransferase (436 aa).

Trp56 is a substrate binding site. 114–115 (GS) is a pyridoxal 5'-phosphate binding site. A substrate-binding site is contributed by Tyr148. Asp245 serves as a coordination point for pyridoxal 5'-phosphate. Lys274, Ser309, and Arg400 together coordinate substrate. An N6-(pyridoxal phosphate)lysine modification is found at Lys274.

Belongs to the class-III pyridoxal-phosphate-dependent aminotransferase family. BioA subfamily. As to quaternary structure, homodimer. Pyridoxal 5'-phosphate serves as cofactor.

The protein resides in the cytoplasm. It carries out the reaction (8S)-8-amino-7-oxononanoate + S-adenosyl-L-methionine = S-adenosyl-4-methylsulfanyl-2-oxobutanoate + (7R,8S)-7,8-diammoniononanoate. It functions in the pathway cofactor biosynthesis; biotin biosynthesis; 7,8-diaminononanoate from 8-amino-7-oxononanoate (SAM route): step 1/1. Its function is as follows. Catalyzes the transfer of the alpha-amino group from S-adenosyl-L-methionine (SAM) to 7-keto-8-aminopelargonic acid (KAPA) to form 7,8-diaminopelargonic acid (DAPA). It is the only aminotransferase known to utilize SAM as an amino donor. The protein is Adenosylmethionine-8-amino-7-oxononanoate aminotransferase of Helicobacter pylori (strain ATCC 700392 / 26695) (Campylobacter pylori).